The sequence spans 308 residues: Glutaminase (308 aa).

The substrate site is built by serine 66, asparagine 117, glutamate 161, asparagine 168, tyrosine 192, tyrosine 244, and valine 262.

This sequence belongs to the glutaminase family. Homotetramer.

It carries out the reaction L-glutamine + H2O = L-glutamate + NH4(+). This Yersinia pestis bv. Antiqua (strain Nepal516) protein is Glutaminase.